The primary structure comprises 162 residues: MISTPLDDLDRAILKLLKKDARLTIAEISNQLKKPESTVHFRIKKLQERGVIEKYTIILGEPIRPRELALVVLEVDKPIIEDFLDRYMEYVTKTLSGFPEVLFVAKSGKEKIVALVGGEDRDKLLKFIEENIESIPTLRSVQVLPISEIKKGDEISGFLAEV.

In terms of domain architecture, HTH asnC-type spans 6 to 99 (LDDLDRAILK…YVTKTLSGFP (94 aa)). The H-T-H motif DNA-binding region spans 25-44 (IAEISNQLKKPESTVHFRIK).

This is an uncharacterized protein from Pyrococcus horikoshii (strain ATCC 700860 / DSM 12428 / JCM 9974 / NBRC 100139 / OT-3).